Reading from the N-terminus, the 81-residue chain is Small ribosomal subunit protein bS16 (81 aa).

This sequence belongs to the bacterial ribosomal protein bS16 family.

The polypeptide is Small ribosomal subunit protein bS16 (Clostridium perfringens (strain ATCC 13124 / DSM 756 / JCM 1290 / NCIMB 6125 / NCTC 8237 / Type A)).